The primary structure comprises 565 residues: NAD-dependent malic enzyme (565 aa).

The Proton donor role is filled by Y104. Position 157 (R157) interacts with NAD(+). The active-site Proton acceptor is K175. A divalent metal cation-binding residues include E246, D247, and D270. NAD(+) contacts are provided by D270 and N418.

It belongs to the malic enzymes family. Homotetramer. The cofactor is Mg(2+). Mn(2+) serves as cofactor.

It catalyses the reaction (S)-malate + NAD(+) = pyruvate + CO2 + NADH. It carries out the reaction oxaloacetate + H(+) = pyruvate + CO2. The polypeptide is NAD-dependent malic enzyme (Escherichia coli (strain SMS-3-5 / SECEC)).